We begin with the raw amino-acid sequence, 761 residues long: Zinc finger protein 711 (761 aa).

Glycyl lysine isopeptide (Lys-Gly) (interchain with G-Cter in SUMO2) cross-links involve residues lysine 224, lysine 235, and lysine 296. C2H2-type zinc fingers lie at residues 383–408 (YPCH…HPDH), 414–436 (YQCT…LESH), 476–499 (HKCK…LAVH), 505–527 (HVCV…MRTH), and 533–556 (YQCQ…KSKH). The interval 515 to 761 (RHPSELKKHM…IMRHHKEALM (247 aa)) is required for transcriptional activation. The C2H2-type 6; atypical zinc-finger motif lies at 562–584 (YKCEHCPQAFGDERELQRHLDLF). 3 residues coordinate Zn(2+): cysteine 564, cysteine 567, and histidine 580. C2H2-type zinc fingers lie at residues 590-613 (HQCP…ISVH), 619-641 (HKCE…SDIH), 647-670 (HQCR…LSVH), 676-698 (LKCK…MKTH), 704-727 (YQCE…ISIH), and 733-755 (HRCE…IMRH).

It belongs to the krueppel C2H2-type zinc-finger protein family. In terms of assembly, interacts with PHF8. As to expression, expressed in neural tissues.

The protein resides in the nucleus. Transcription regulator required for brain development. Probably acts as a transcription factor that binds to the promoter of target genes and recruits PHF8 histone demethylase, leading to activated expression of genes involved in neuron development, such as KDM5C. May compete with transcription factor ARX for activation of expression of KDM5C. The sequence is that of Zinc finger protein 711 (ZNF711) from Homo sapiens (Human).